We begin with the raw amino-acid sequence, 439 residues long: Ornithine aminotransferase, mitochondrial (439 aa).

The transit peptide at 1-25 (MFSKLAHLQRFAVLSRGVHSSVASA) directs the protein to the mitochondrion; in hepatic form. A mitochondrion; in renal form-targeting transit peptide spans 1–35 (MFSKLAHLQRFAVLSRGVHSSVASATSVATKKTVQ). An N6-acetyllysine mark is found at Lys49 and Lys66. Lys102 carries the post-translational modification N6-succinyllysine. At Lys107 the chain carries N6-acetyllysine; alternate. N6-succinyllysine; alternate is present on Lys107. At Lys292 the chain carries N6-(pyridoxal phosphate)lysine. Lys362 carries the post-translational modification N6-acetyllysine; alternate. Lys362 carries the post-translational modification N6-succinyllysine; alternate. N6-acetyllysine is present on residues Lys386 and Lys392. Lys405 is subject to N6-acetyllysine; alternate. Lys405 bears the N6-succinyllysine; alternate mark. Position 421 is an N6-acetyllysine (Lys421).

This sequence belongs to the class-III pyridoxal-phosphate-dependent aminotransferase family. Homohexamer. Pyridoxal 5'-phosphate serves as cofactor.

The protein localises to the mitochondrion matrix. It catalyses the reaction L-ornithine + 2-oxoglutarate = L-glutamate 5-semialdehyde + L-glutamate. It participates in amino-acid biosynthesis; L-proline biosynthesis; L-glutamate 5-semialdehyde from L-ornithine: step 1/1. Catalyzes the reversible interconversion of L-ornithine and 2-oxoglutarate to L-glutamate semialdehyde and L-glutamate. This is Ornithine aminotransferase, mitochondrial (OAT) from Homo sapiens (Human).